The following is a 757-amino-acid chain: uncharacterized protein (757 aa).

One can recognise an S1 motif domain in the interval 640-709 (GMILEGVVSN…ARKRIALTMR (70 aa)). Basic and acidic residues predominate over residues 711–741 (DDEPGGAKHKMPSENRSRERTAGRKPQRNDR). A disordered region spans residues 711–757 (DDEPGGAKHKMPSENRSRERTAGRKPQRNDRAPANSAMADAFAKLKR).

This is an uncharacterized protein from Neisseria meningitidis serogroup B (strain ATCC BAA-335 / MC58).